Here is a 541-residue protein sequence, read N- to C-terminus: Chaperonin GroEL (541 aa).

ATP contacts are provided by residues 29–32 (TIGP), 86–90 (DGTTT), G413, and D494.

It belongs to the chaperonin (HSP60) family. Forms a cylinder of 14 subunits composed of two heptameric rings stacked back-to-back. Interacts with the co-chaperonin GroES.

Its subcellular location is the cytoplasm. It catalyses the reaction ATP + H2O + a folded polypeptide = ADP + phosphate + an unfolded polypeptide.. Together with its co-chaperonin GroES, plays an essential role in assisting protein folding. The GroEL-GroES system forms a nano-cage that allows encapsulation of the non-native substrate proteins and provides a physical environment optimized to promote and accelerate protein folding. The protein is Chaperonin GroEL of Lachnospira eligens (strain ATCC 27750 / DSM 3376 / VPI C15-48 / C15-B4) (Eubacterium eligens).